Consider the following 116-residue polypeptide: Large ribosomal subunit protein bL19 (116 aa).

The protein belongs to the bacterial ribosomal protein bL19 family.

Its function is as follows. This protein is located at the 30S-50S ribosomal subunit interface and may play a role in the structure and function of the aminoacyl-tRNA binding site. The sequence is that of Large ribosomal subunit protein bL19 from Haemophilus influenzae (strain 86-028NP).